We begin with the raw amino-acid sequence, 544 residues long: MVAKNIKYNEEARKKIQKGVKTLAEAVKVTLGPKGRHVVIDKSFGSPQVTKDGVTVAKEVELADKHENMGAQMVKEVASKTADKAGDGTTTATVLAEAIYTEGLRNVTAGANPMDLKRGIDKAVKVVVDQIRKISKPVQHHKEIAQVATISANNDAEIGNLIAEAMEKVGKNGSITVEEAKGFETVLDIVEGMNFNRGYLSSYFATNPETQECVLEDALVLIYDKKISGIKDFLPVLQQVAESGRPLLIIAEDIEGEALATLVVNRIRGGFRVCAVKAPGFGDRRKAMLEDIAILTGGQLISEELGMKLENANLAMLGKAKKVIVSKEDTTIVEGMGEKEALEARCESIKKQIEDSSSDYDKEKLQERLAKLSGGVAVIRVGAATEIEMKEKKDRVDDAQHATIAAVEEGILPGGGTALIRCIPTLEAFLPMLTNEDEQIGARIVLKALSAPLKQIAANAGKEGAIIFQQVMSRSANEGYDALRDAYTDMLEAGILDPAKVTRSALESAASVAGLLLTTEALIAEIPEEKPAAAPAMPGAGMDY.

ATP contacts are provided by residues 30–33 (TLGP), K51, 87–91 (DGTTT), G415, 481–483 (DAL), and D497.

This sequence belongs to the chaperonin (HSP60) family. As to quaternary structure, forms a cylinder of 14 subunits composed of two heptameric rings stacked back-to-back. Interacts with the co-chaperonin GroES.

The protein resides in the cytoplasm. The catalysed reaction is ATP + H2O + a folded polypeptide = ADP + phosphate + an unfolded polypeptide.. Together with its co-chaperonin GroES, plays an essential role in assisting protein folding. The GroEL-GroES system forms a nano-cage that allows encapsulation of the non-native substrate proteins and provides a physical environment optimized to promote and accelerate protein folding. This Chlamydia trachomatis serovar D (strain ATCC VR-885 / DSM 19411 / UW-3/Cx) protein is Chaperonin GroEL.